The sequence spans 156 residues: CD-NTase/cGAS isopeptidase (156 aa).

The MPN domain maps to 9-147 (IDDFDNHVVI…WIGKKIKNDI (139 aa)). Catalysis depends on glutamate 38, which acts as the Proton donor/acceptor. Zn(2+) is bound by residues histidine 100, histidine 102, and aspartate 113. A JAMM motif motif is present at residues 100 to 113 (HTHPEDFPHPSFID).

It belongs to the peptidase M67B family. Cap3 isopeptidase subfamily.

Metalloprotease priming reversal component of a CBASS antivirus system. CBASS (cyclic oligonucleotide-based antiphage signaling system) provides immunity against bacteriophages. The CD-NTase protein (DncV) synthesizes cyclic nucleotides in response to infection; these serve as specific second messenger signals. The signals activate a diverse range of effectors, leading to bacterial cell death and thus abortive phage infection. A type II-A(GA) CBASS system. In terms of biological role, reverses the primed state of DncV, the CD-NTase, cleaving it from cellular proteins. Cleaves a Sumo-DncV-DncV fusion protein precisely between the 2 DncV moieties. Its function is as follows. Protects E.coli against phage infection. When capV and dncV are introduced in E.coli MG1655 there is 1000-fold protection against phage P1; protection against other phage (T4, T5 and T6) requires the 2 subsequent genes. In another paper the capV-dncV-cap2-cap3 operon gives 10(4)-10(5)-fold protection against phages lambda, T2, T4 and T6, about 1000-fold protection against P1 and 10-fold protection against T5. In Escherichia coli (strain TW11681), this protein is CD-NTase/cGAS isopeptidase.